We begin with the raw amino-acid sequence, 682 residues long: Probable glycosyl transferase Gly (682 aa).

Residues 21–26 (CASFSD) and 112–113 (DC) each bind UDP. Mn(2+)-binding residues include D112, D114, and H230. 230-236 (HYLPERK) contacts UDP.

It belongs to the glycosyltransferase 8 family. As to quaternary structure, part of the accessory SecA2/SecY2 protein translocation apparatus required to export cell wall protein GspB.

Part of the accessory SecA2/SecY2 system specifically required to export GspB, a serine-rich repeat cell wall protein encoded upstream in the same operon. This chain is Probable glycosyl transferase Gly (gly), found in Streptococcus gordonii.